The primary structure comprises 204 residues: Small heat shock protein, chloroplastic (204 aa).

The tract at residues Gln-34 to Arg-55 is disordered. The segment covering Arg-37–Asn-49 has biased composition (basic and acidic residues). One can recognise a sHSP domain in the interval Gly-98–Asp-204.

This sequence belongs to the small heat shock protein (HSP20) family.

The protein resides in the plastid. It localises to the chloroplast stroma. The polypeptide is Small heat shock protein, chloroplastic (HSP23) (Oxybasis rubra (Red goosefoot)).